Reading from the N-terminus, the 150-residue chain is SPbeta prophage-derived uncharacterized protein YoqH (150 aa).

A signal peptide spans 1-23 (MKRFILVLSFLSIIVAYPIQTNA).

The sequence is that of SPbeta prophage-derived uncharacterized protein YoqH (yoqH) from Bacillus subtilis (strain 168).